The chain runs to 359 residues: UDP-N-acetylglucosamine--N-acetylmuramyl-(pentapeptide) pyrophosphoryl-undecaprenol N-acetylglucosamine transferase (359 aa).

UDP-N-acetyl-alpha-D-glucosamine is bound by residues 15-17, Asn127, Arg166, Ser191, Ile245, 264-269, and Gln290; these read TGG and ALTVSE.

This sequence belongs to the glycosyltransferase 28 family. MurG subfamily.

The protein localises to the cell inner membrane. It carries out the reaction di-trans,octa-cis-undecaprenyl diphospho-N-acetyl-alpha-D-muramoyl-L-alanyl-D-glutamyl-meso-2,6-diaminopimeloyl-D-alanyl-D-alanine + UDP-N-acetyl-alpha-D-glucosamine = di-trans,octa-cis-undecaprenyl diphospho-[N-acetyl-alpha-D-glucosaminyl-(1-&gt;4)]-N-acetyl-alpha-D-muramoyl-L-alanyl-D-glutamyl-meso-2,6-diaminopimeloyl-D-alanyl-D-alanine + UDP + H(+). It participates in cell wall biogenesis; peptidoglycan biosynthesis. Functionally, cell wall formation. Catalyzes the transfer of a GlcNAc subunit on undecaprenyl-pyrophosphoryl-MurNAc-pentapeptide (lipid intermediate I) to form undecaprenyl-pyrophosphoryl-MurNAc-(pentapeptide)GlcNAc (lipid intermediate II). This chain is UDP-N-acetylglucosamine--N-acetylmuramyl-(pentapeptide) pyrophosphoryl-undecaprenol N-acetylglucosamine transferase, found in Pseudomonas entomophila (strain L48).